A 486-amino-acid polypeptide reads, in one-letter code: Aromatic-L-amino-acid decarboxylase (486 aa).

Position 1 is an N-acetylmethionine (M1). 2 repeat units span residues 58–115 (QDVE…TELE) and 118–178 (MMDW…TQGA). Residues 58-178 (QDVEKIIMPG…AASPGLTQGA (121 aa)) are 2 X approximate tandem repeats. Substrate is bound at residue T82. Pyridoxal 5'-phosphate contacts are provided by A148 and S149. H192 contacts substrate. Residues T246 and N300 each contribute to the pyridoxal 5'-phosphate site. K303 carries the post-translational modification N6-(pyridoxal phosphate)lysine.

This sequence belongs to the group II decarboxylase family. In terms of assembly, homodimer. Pyridoxal 5'-phosphate is required as a cofactor.

It catalyses the reaction L-dopa + H(+) = dopamine + CO2. The enzyme catalyses 5-hydroxy-L-tryptophan + H(+) = serotonin + CO2. It functions in the pathway catecholamine biosynthesis; dopamine biosynthesis; dopamine from L-tyrosine: step 2/2. Functionally, catalyzes the decarboxylation of L-3,4-dihydroxyphenylalanine (DOPA) to dopamine and L-5-hydroxytryptophan to serotonin. In Sus scrofa (Pig), this protein is Aromatic-L-amino-acid decarboxylase (DDC).